A 1399-amino-acid polypeptide reads, in one-letter code: DNA-directed RNA polymerase subunit beta' (1399 aa).

C70, C72, C85, and C88 together coordinate Zn(2+). Residues D460, D462, and D464 each coordinate Mg(2+). Zn(2+) contacts are provided by C814, C888, C895, and C898.

Belongs to the RNA polymerase beta' chain family. The RNAP catalytic core consists of 2 alpha, 1 beta, 1 beta' and 1 omega subunit. When a sigma factor is associated with the core the holoenzyme is formed, which can initiate transcription. It depends on Mg(2+) as a cofactor. Zn(2+) serves as cofactor.

It carries out the reaction RNA(n) + a ribonucleoside 5'-triphosphate = RNA(n+1) + diphosphate. Functionally, DNA-dependent RNA polymerase catalyzes the transcription of DNA into RNA using the four ribonucleoside triphosphates as substrates. The chain is DNA-directed RNA polymerase subunit beta' from Stutzerimonas stutzeri (strain A1501) (Pseudomonas stutzeri).